We begin with the raw amino-acid sequence, 123 residues long: Small ribosomal subunit protein uS12 (123 aa).

The tract at residues methionine 1 to lysine 30 is disordered. A compositionally biased stretch (basic residues) spans arginine 9–serine 21. Aspartate 89 bears the 3-methylthioaspartic acid mark. Residues threonine 104 to lysine 123 form a disordered region. Positions arginine 110 to lysine 123 are enriched in basic residues.

It belongs to the universal ribosomal protein uS12 family. In terms of assembly, part of the 30S ribosomal subunit. Contacts proteins S8 and S17. May interact with IF1 in the 30S initiation complex.

Functionally, with S4 and S5 plays an important role in translational accuracy. In terms of biological role, interacts with and stabilizes bases of the 16S rRNA that are involved in tRNA selection in the A site and with the mRNA backbone. Located at the interface of the 30S and 50S subunits, it traverses the body of the 30S subunit contacting proteins on the other side and probably holding the rRNA structure together. The combined cluster of proteins S8, S12 and S17 appears to hold together the shoulder and platform of the 30S subunit. The polypeptide is Small ribosomal subunit protein uS12 (Jannaschia sp. (strain CCS1)).